We begin with the raw amino-acid sequence, 480 residues long: MNPSISTAGAVVDDFQMSCRFSNFGDHAPESFDSLSCGACFYFIFMLVEHYKDRYVASLCEDTFGVLVCPVDVSDKICNCYNREYVYNIPEFALNSSRIKPLNHLRLDPPLPFQFDLIVKDCCSAARYCCRNTLVKYHHRVDDSPCPPTWDGWNCFDSATPGVVFKQCPNYIYGGSNIKTDYDRLSQKVCRSNGWATPEVNAAAREHTDYTGCMSNGDVEARILAGLLTYSASVIFLIPAVFLLTLLRPIRCQPMFILHRHLLISCLLYGAFYLITVSLFVVNDAPLSSQVFQNHLFCRLLFSIQLRYLRLTNFTWMLAEAVYLWRLLHTAQHSEGETLRSYKVICWGVPGVITVVYIFVRSLNDDVGMCWIENSTVAWIEWMIITPSLLAMGVNLLLLGLIVYILVKKLRCDPHLERIQYRKAVRGALMLIPVFGVQQLLTIYRFRNVCLIYRLLHKSFCRRMCSEILVITSGEAGSRS.

At 1 to 222 (MNPSISTAGA…CMSNGDVEAR (222 aa)) the chain is on the extracellular side. N95 carries an N-linked (GlcNAc...) asparagine glycan. Residues 223-243 (ILAGLLTYSASVIFLIPAVFL) traverse the membrane as a helical segment. Topologically, residues 244–261 (LTLLRPIRCQPMFILHRH) are cytoplasmic. Residues 262-282 (LLISCLLYGAFYLITVSLFVV) form a helical membrane-spanning segment. The Extracellular segment spans residues 283-305 (NDAPLSSQVFQNHLFCRLLFSIQ). A helical membrane pass occupies residues 306 to 328 (LRYLRLTNFTWMLAEAVYLWRLL). Over 329–343 (HTAQHSEGETLRSYK) the chain is Cytoplasmic. Residues 344–364 (VICWGVPGVITVVYIFVRSLN) traverse the membrane as a helical segment. Over 365-386 (DDVGMCWIENSTVAWIEWMIIT) the chain is Extracellular. Residues 387-407 (PSLLAMGVNLLLLGLIVYILV) traverse the membrane as a helical segment. The Cytoplasmic segment spans residues 408-423 (KKLRCDPHLERIQYRK). The chain crosses the membrane as a helical span at residues 424–444 (AVRGALMLIPVFGVQQLLTIY). Topologically, residues 445-480 (RFRNVCLIYRLLHKSFCRRMCSEILVITSGEAGSRS) are extracellular.

This sequence belongs to the G-protein coupled receptor 2 family. Present in the head body-wall muscles from the L1 larval stage through to adulthood. Also expressed between L4 and the adult molt in vulval vm1 muscle cells. These cells play a role in opening the vulva during egg laying.

The protein resides in the cell membrane. Functionally, not known. Putative receptor. The chain is G-protein coupled receptor seb-2 from Caenorhabditis elegans.